Consider the following 1007-residue polypeptide: Kinesin-like protein KIN-7D, chloroplastic (1007 aa).

The N-terminal 53 residues, 1-53 (MATRPASRQRRASSAAAAVAVVRSSPQPQQQQQQQLPIPQSGSPTSTTTTTTS), are a transit peptide targeting the chloroplast. A compositionally biased stretch (low complexity) spans 1–55 (MATRPASRQRRASSAAAAVAVVRSSPQPQQQQQQQLPIPQSGSPTSTTTTTTSSS). Residues 1 to 79 (MATRPASRQR…LFAGLDEDPA (79 aa)) form a disordered region. Residues 83-402 (NVTVTVRFRP…LKFAHRAKRI (320 aa)) enclose the Kinesin motor domain. 163–170 (GVTSSGKT) contributes to the ATP binding site. A coiled-coil region spans residues 403-495 (EVQASQNKII…QRLTKLILVS (93 aa)). The segment at 579–607 (ILTSSEGDKSSLTKSTAPSTPIGESVNFP) is disordered. Coiled coils occupy residues 687-716 (NNEK…ERQI), 754-791 (AADN…TLQA), and 836-907 (SVEI…SVRS). A disordered region spans residues 901-941 (ELASVRSPTPRRANSGLRGTRRDSISRRHEPAPRRDNNAGY). Basic and acidic residues predominate over residues 920 to 941 (TRRDSISRRHEPAPRRDNNAGY). Positions 942 to 982 (EREKALEAVLMEKEQKEAELQRRIEESKQKEAFLESELANM) form a coiled coil.

This sequence belongs to the TRAFAC class myosin-kinesin ATPase superfamily. Kinesin family. KIN-7 subfamily. Binds microtubules. Homodimer. Mg(2+) serves as cofactor.

It is found in the plastid. The protein localises to the chloroplast. In terms of biological role, probable minus end-directed motor protein with a microtubule-enhanced ATPase activity. Binds ATP/ADP in vitro. Retains total enzymatic activity even after the removal of the ADP bound in the active site. The sequence is that of Kinesin-like protein KIN-7D, chloroplastic from Oryza sativa subsp. japonica (Rice).